Reading from the N-terminus, the 206-residue chain is Large ribosomal subunit protein uL4 (206 aa).

The segment covering 42 to 54 has biased composition (polar residues); the sequence is RRQQGTHQSQGRS. Residues 42–93 are disordered; sequence RRQQGTHQSQGRSDVSRTGAKMFKQKGTGRARHSSARAPQFRGGGKAHGPVV. Basic residues predominate over residues 64–76; the sequence is FKQKGTGRARHSS.

It belongs to the universal ribosomal protein uL4 family. In terms of assembly, part of the 50S ribosomal subunit.

One of the primary rRNA binding proteins, this protein initially binds near the 5'-end of the 23S rRNA. It is important during the early stages of 50S assembly. It makes multiple contacts with different domains of the 23S rRNA in the assembled 50S subunit and ribosome. Functionally, forms part of the polypeptide exit tunnel. This Bartonella henselae (strain ATCC 49882 / DSM 28221 / CCUG 30454 / Houston 1) (Rochalimaea henselae) protein is Large ribosomal subunit protein uL4.